Reading from the N-terminus, the 577-residue chain is Adenine deaminase (577 aa).

It belongs to the metallo-dependent hydrolases superfamily. Adenine deaminase family. Mn(2+) is required as a cofactor.

It catalyses the reaction adenine + H2O + H(+) = hypoxanthine + NH4(+). In Geobacillus kaustophilus (strain HTA426), this protein is Adenine deaminase.